The primary structure comprises 454 residues: Tryptophanase (454 aa).

Lysine 256 carries the post-translational modification N6-(pyridoxal phosphate)lysine.

The protein belongs to the beta-eliminating lyase family. As to quaternary structure, homotetramer. The cofactor is pyridoxal 5'-phosphate.

It carries out the reaction L-tryptophan + H2O = indole + pyruvate + NH4(+). Its pathway is amino-acid degradation; L-tryptophan degradation via pyruvate pathway; indole and pyruvate from L-tryptophan: step 1/1. This chain is Tryptophanase (tnaA), found in Rhodobacter capsulatus (Rhodopseudomonas capsulata).